The primary structure comprises 424 residues: SWI/SNF and RSC complexes subunit arp42 (424 aa).

This sequence belongs to the actin family. In terms of assembly, component of the RSC complex composed of at least arp9, arp42, rsc1, rsc4, rsc7, rsc9, rsc58, sfh1, snf21, ssr1, ssr2, ssr3 and ssr4. The complex interacts with histone and histone variant components of centromeric chromatin. Component of the SWI/SNF global transcription activator complex composed of at least arp9, arp42, snf5, snf22, snf30, sbf59, sol1, ssr1, ssr2, ssr3, ssr4 and tfg3.

It is found in the cytoplasm. The protein localises to the nucleus. In terms of biological role, component of the chromatin structure remodeling complex (RSC), which is involved in transcription regulation and nucleosome positioning. Controls particularly membrane and organelle development genes. Part of the SWI/SNF complex, an ATP-dependent chromatin remodeling complex, required for the positive and negative regulation of gene expression of a large number of genes. It changes chromatin structure by altering DNA-histone contacts within a nucleosome, leading eventually to a change in nucleosome position, thus facilitating or repressing binding of gene-specific transcription factors. This chain is SWI/SNF and RSC complexes subunit arp42 (arp42), found in Schizosaccharomyces pombe (strain 972 / ATCC 24843) (Fission yeast).